The following is a 193-amino-acid chain: Glycerol-3-phosphate acyltransferase (193 aa).

The next 5 helical transmembrane spans lie at 2-22 (AFII…AVIV), 51-71 (QAAF…VLIA), 78-98 (GVSL…PVYF), 112-132 (VLLG…VIVV), and 154-174 (IIAG…LLIW).

This sequence belongs to the PlsY family. In terms of assembly, probably interacts with PlsX.

It localises to the cell inner membrane. It carries out the reaction an acyl phosphate + sn-glycerol 3-phosphate = a 1-acyl-sn-glycero-3-phosphate + phosphate. It participates in lipid metabolism; phospholipid metabolism. Functionally, catalyzes the transfer of an acyl group from acyl-phosphate (acyl-PO(4)) to glycerol-3-phosphate (G3P) to form lysophosphatidic acid (LPA). This enzyme utilizes acyl-phosphate as fatty acyl donor, but not acyl-CoA or acyl-ACP. This Coxiella burnetii (strain CbuG_Q212) (Coxiella burnetii (strain Q212)) protein is Glycerol-3-phosphate acyltransferase.